Reading from the N-terminus, the 437-residue chain is Flagellar biosynthesis protein FlhF (437 aa).

Residues Gly225–Thr232, Asp303–Leu307, and Thr361–Asp364 each bind GTP.

Belongs to the GTP-binding SRP family.

It is found in the cell membrane. Its function is as follows. Necessary for flagellar biosynthesis. May be involved in translocation of the flagellum. The chain is Flagellar biosynthesis protein FlhF (flhF) from Pseudomonas putida (Arthrobacter siderocapsulatus).